Here is a 212-residue protein sequence, read N- to C-terminus: MGTNKPVVIGIAGGSGSGKTSVTKAIFDHFKGHSILILEQDYYYKDQSHLPMEERLKTNYDHPLAFDNDLLIEHLQQLLAYKQVDKPVYDYTLHTRSEEIIPVEPKDVIILEGILILEDPRLCELMDIKLFVDTDADLRILRRMQRDIKERGRTMDSVIDQYVNVVRPMHNQFIEPSKKFADIIIPEGGQNHVAIDIMVTKIATILEQKVNL.

13-20 (GGSGSGKT) contacts ATP.

Belongs to the uridine kinase family.

It localises to the cytoplasm. It catalyses the reaction uridine + ATP = UMP + ADP + H(+). It carries out the reaction cytidine + ATP = CMP + ADP + H(+). It functions in the pathway pyrimidine metabolism; CTP biosynthesis via salvage pathway; CTP from cytidine: step 1/3. It participates in pyrimidine metabolism; UMP biosynthesis via salvage pathway; UMP from uridine: step 1/1. The chain is Uridine kinase from Bacillus thuringiensis (strain Al Hakam).